Here is a 72-residue protein sequence, read N- to C-terminus: NAD(P)H-quinone oxidoreductase subunit O (72 aa).

Belongs to the complex I NdhO subunit family. NDH-1 can be composed of about 15 different subunits; different subcomplexes with different compositions have been identified which probably have different functions.

The protein resides in the cellular thylakoid membrane. The enzyme catalyses a plastoquinone + NADH + (n+1) H(+)(in) = a plastoquinol + NAD(+) + n H(+)(out). The catalysed reaction is a plastoquinone + NADPH + (n+1) H(+)(in) = a plastoquinol + NADP(+) + n H(+)(out). Its function is as follows. NDH-1 shuttles electrons from an unknown electron donor, via FMN and iron-sulfur (Fe-S) centers, to quinones in the respiratory and/or the photosynthetic chain. The immediate electron acceptor for the enzyme in this species is believed to be plastoquinone. Couples the redox reaction to proton translocation, and thus conserves the redox energy in a proton gradient. Cyanobacterial NDH-1 also plays a role in inorganic carbon-concentration. The chain is NAD(P)H-quinone oxidoreductase subunit O from Trichodesmium erythraeum (strain IMS101).